The sequence spans 644 residues: 1-deoxy-D-xylulose-5-phosphate synthase (644 aa).

Thiamine diphosphate-binding positions include H72 and 113-115 (GHA). D144 serves as a coordination point for Mg(2+). Thiamine diphosphate is bound by residues 145-146 (GA), N174, Y287, and E370. A Mg(2+)-binding site is contributed by N174.

The protein belongs to the transketolase family. DXPS subfamily. Homodimer. Mg(2+) serves as cofactor. It depends on thiamine diphosphate as a cofactor.

The catalysed reaction is D-glyceraldehyde 3-phosphate + pyruvate + H(+) = 1-deoxy-D-xylulose 5-phosphate + CO2. Its pathway is metabolic intermediate biosynthesis; 1-deoxy-D-xylulose 5-phosphate biosynthesis; 1-deoxy-D-xylulose 5-phosphate from D-glyceraldehyde 3-phosphate and pyruvate: step 1/1. Its function is as follows. Catalyzes the acyloin condensation reaction between C atoms 2 and 3 of pyruvate and glyceraldehyde 3-phosphate to yield 1-deoxy-D-xylulose-5-phosphate (DXP). This chain is 1-deoxy-D-xylulose-5-phosphate synthase, found in Prochlorococcus marinus (strain MIT 9303).